Consider the following 469-residue polypeptide: Probable monogalactosyldiacylglycerol synthase 2, chloroplastic (469 aa).

The transit peptide at 1-42 (MVISVATPRRSIRDAVLGGVLGAGGRQLYQPLRCAFYDGAAG) directs the protein to the chloroplast.

It belongs to the glycosyltransferase 28 family.

It localises to the plastid. It is found in the chloroplast membrane. It carries out the reaction a 1,2-diacyl-sn-glycerol + UDP-alpha-D-galactose = a 1,2-diacyl-3-O-(beta-D-galactosyl)-sn-glycerol + UDP + H(+). Its function is as follows. Involved in the synthesis of the major structural component of photosynthetic membranes. This chain is Probable monogalactosyldiacylglycerol synthase 2, chloroplastic (MGD2), found in Oryza sativa subsp. japonica (Rice).